The sequence spans 262 residues: MKVIKTLSIINFFIFVTFNIKNESKYSNTFINNAYNMSIRRSMAESKPPTGTGGSGSAGSGAGASAGNGANPGADAERSPSTPATPATPATTTTTTTTNDAEASTSTSSENPNHKNAETNPKGKGEVQKPNQANKETQNNSNVQQDSQTKSNVPPTQDADTKSPTAQPEQAENSAPTAEQTESPELQSAPENKGTGQHGHMHGSRNNHPQNTSDSQKECTDGNKENCGAATSLLNNSSNIASINKFVVLISATLVLSFAIFI.

The N-terminal stretch at 1–20 is a signal peptide; sequence MKVIKTLSIINFFIFVTFNI. 2 N-linked (GlcNAc...) asparagine glycosylation sites follow: N22 and N36. The tract at residues 44 to 188 is polymorphic region; sequence AESKPPTGTG…EQTESPELQS (145 aa). The segment at 44-223 is disordered; that stretch reads AESKPPTGTG…DSQKECTDGN (180 aa). Residues 51-66 are compositionally biased toward gly residues; it reads GTGGSGSAGSGAGASA. The segment covering 67 to 111 has biased composition (low complexity); the sequence is GNGANPGADAERSPSTPATPATPATTTTTTTTNDAEASTSTSSEN. Basic and acidic residues predominate over residues 112–127; the sequence is PNHKNAETNPKGKGEV. 2 stretches are compositionally biased toward polar residues: residues 129–155 and 162–190; these read KPNQANKETQNNSNVQQDSQTKSNVPP and KSPTAQPEQAENSAPTAEQTESPELQSAP. Residue N139 is glycosylated (N-linked (GlcNAc...) asparagine). N-linked (GlcNAc...) asparagine glycosylation occurs at N211. A disulfide bond links C219 and C227. 2 N-linked (GlcNAc...) asparagine glycosylation sites follow: N235 and N236. N236 carries the GPI-anchor amidated asparagine lipid modification. Residues 237-262 constitute a propeptide, removed in mature form; that stretch reads SSNIASINKFVVLISATLVLSFAIFI.

Its subcellular location is the cell membrane. Its function is as follows. May play a role in the merozoite attachment to the erythrocyte. The chain is Merozoite surface protein 2 from Plasmodium falciparum (isolate Camp / Malaysia).